A 659-amino-acid chain; its full sequence is PAN2-PAN3 deadenylation complex subunit PAN3 (659 aa).

2 disordered regions span residues methionine 1–asparagine 26 and proline 103–isoleucine 132. Residues asparagine 26–leucine 55 form a C3H1-type zinc finger. A compositionally biased stretch (polar residues) spans serine 115–isoleucine 132. The segment at glutamine 262–serine 522 is pseudokinase domain. Residues arginine 314, aspartate 363–threonine 370, and serine 422–lysine 423 each bind ATP. Residues serine 523–leucine 561 adopt a coiled-coil conformation. Positions valine 562–histidine 659 are knob domain.

Belongs to the protein kinase superfamily. PAN3 family. In terms of assembly, homodimer. Forms a heterotrimer with a catalytic subunit pan2 to form the poly(A)-nuclease (PAN) deadenylation complex. Interacts (via PAM-2 motif) with poly(A)-binding protein pab1 (via PABC domain), conferring substrate specificity of the enzyme complex.

It localises to the cytoplasm. Functionally, regulatory subunit of the poly(A)-nuclease (PAN) deadenylation complex, one of two cytoplasmic mRNA deadenylases involved in mRNA turnover. PAN specifically shortens poly(A) tails of RNA and the activity is stimulated by poly(A)-binding protein pab1. PAN deadenylation is followed by rapid degradation of the shortened mRNA tails by the CCR4-NOT complex. Deadenylated mRNAs are then degraded by two alternative mechanisms, namely exosome-mediated 3'-5' exonucleolytic degradation, or deadenylation-dependent mRNA decaping and subsequent 5'-3' exonucleolytic degradation by xrn1. May also be involved in post-transcriptional maturation of mRNA poly(A) tails. pan3 acts as a positive regulator for PAN activity, recruiting the catalytic subunit pan2 to mRNA via its interaction with RNA and with pab1. This chain is PAN2-PAN3 deadenylation complex subunit PAN3, found in Aspergillus clavatus (strain ATCC 1007 / CBS 513.65 / DSM 816 / NCTC 3887 / NRRL 1 / QM 1276 / 107).